The primary structure comprises 577 residues: Glycine--tRNA ligase (577 aa).

Positions 96 and 161 each coordinate substrate. ATP-binding positions include 193–195 (RNE), 203–208 (IRLREF), 319–320 (EI), and 434–437 (GIDR). Residue 208 to 212 (FSQAE) coordinates substrate. Position 430–434 (430–434 (EPSFG)) interacts with substrate.

It belongs to the class-II aminoacyl-tRNA synthetase family.

Its subcellular location is the cytoplasm. The enzyme catalyses tRNA(Gly) + glycine + ATP = glycyl-tRNA(Gly) + AMP + diphosphate. Catalyzes the attachment of glycine to tRNA(Gly). This Methanothrix thermoacetophila (strain DSM 6194 / JCM 14653 / NBRC 101360 / PT) (Methanosaeta thermophila) protein is Glycine--tRNA ligase.